A 305-amino-acid chain; its full sequence is Probable GTP 3',8-cyclase (305 aa).

A Radical SAM core domain is found at 6-228; that stretch reads NHRRPLVSLR…MTRKFMQDRK (223 aa). Residue Arg15 participates in GTP binding. Cys22 and Cys26 together coordinate [4Fe-4S] cluster. Tyr28 is an S-adenosyl-L-methionine binding site. Cys29 is a [4Fe-4S] cluster binding site. Arg62 is a GTP binding site. Gly66 contacts S-adenosyl-L-methionine. Thr92 is a binding site for GTP. Ser116 is an S-adenosyl-L-methionine binding site. Residue Lys153 participates in GTP binding. Cys249 and Cys252 together coordinate [4Fe-4S] cluster. 254-256 lines the GTP pocket; the sequence is RLR. Cys266 lines the [4Fe-4S] cluster pocket.

It belongs to the radical SAM superfamily. MoaA family. Requires [4Fe-4S] cluster as cofactor.

The enzyme catalyses GTP + AH2 + S-adenosyl-L-methionine = (8S)-3',8-cyclo-7,8-dihydroguanosine 5'-triphosphate + 5'-deoxyadenosine + L-methionine + A + H(+). It participates in cofactor biosynthesis; molybdopterin biosynthesis. Functionally, catalyzes the cyclization of GTP to (8S)-3',8-cyclo-7,8-dihydroguanosine 5'-triphosphate. This chain is Probable GTP 3',8-cyclase, found in Methanothermobacter marburgensis (strain ATCC BAA-927 / DSM 2133 / JCM 14651 / NBRC 100331 / OCM 82 / Marburg) (Methanobacterium thermoautotrophicum).